A 156-amino-acid polypeptide reads, in one-letter code: Ribosome maturation factor RimP (156 aa).

Belongs to the RimP family.

The protein localises to the cytoplasm. Required for maturation of 30S ribosomal subunits. The sequence is that of Ribosome maturation factor RimP from Bacillus cytotoxicus (strain DSM 22905 / CIP 110041 / 391-98 / NVH 391-98).